The sequence spans 596 residues: Elongation factor 4 (596 aa).

A tr-type G domain is found at 2–184; that stretch reads KHIRNFSIIA…VIVAQIPPPE (183 aa). Residues 14–19 and 131–134 contribute to the GTP site; these read DHGKST and NKID.

It belongs to the TRAFAC class translation factor GTPase superfamily. Classic translation factor GTPase family. LepA subfamily.

The protein resides in the cell inner membrane. It catalyses the reaction GTP + H2O = GDP + phosphate + H(+). Functionally, required for accurate and efficient protein synthesis under certain stress conditions. May act as a fidelity factor of the translation reaction, by catalyzing a one-codon backward translocation of tRNAs on improperly translocated ribosomes. Back-translocation proceeds from a post-translocation (POST) complex to a pre-translocation (PRE) complex, thus giving elongation factor G a second chance to translocate the tRNAs correctly. Binds to ribosomes in a GTP-dependent manner. The polypeptide is Elongation factor 4 (Shewanella woodyi (strain ATCC 51908 / MS32)).